Reading from the N-terminus, the 293-residue chain is Large ribosomal subunit protein uL18 (293 aa).

Positions 247 to 263 (IRANPAHEKKQPRDGLV) are enriched in basic and acidic residues. The segment at 247 to 283 (IRANPAHEKKQPRDGLVKKRWNRAKMSLKQKRDRVKQ) is disordered. Residues 264–283 (KKRWNRAKMSLKQKRDRVKQ) are compositionally biased toward basic residues.

Belongs to the universal ribosomal protein uL18 family. As to quaternary structure, component of the large ribosomal subunit (LSU).

It localises to the cytoplasm. Its subcellular location is the nucleus. In terms of biological role, component of the ribosome, a large ribonucleoprotein complex responsible for the synthesis of proteins in the cell. The small ribosomal subunit (SSU) binds messenger RNAs (mRNAs) and translates the encoded message by selecting cognate aminoacyl-transfer RNA (tRNA) molecules. The large subunit (LSU) contains the ribosomal catalytic site termed the peptidyl transferase center (PTC), which catalyzes the formation of peptide bonds, thereby polymerizing the amino acids delivered by tRNAs into a polypeptide chain. The nascent polypeptides leave the ribosome through a tunnel in the LSU and interact with protein factors that function in enzymatic processing, targeting, and the membrane insertion of nascent chains at the exit of the ribosomal tunnel. The chain is Large ribosomal subunit protein uL18 (RPL5) from Suberites domuncula (Sponge).